Here is a 174-residue protein sequence, read N- to C-terminus: Ribosome maturation factor RimM (174 aa).

The PRC barrel domain occupies 97–169 (PDTYYDHQLE…ILEIDPPDGL (73 aa)).

It belongs to the RimM family. As to quaternary structure, binds ribosomal protein uS19.

It is found in the cytoplasm. Functionally, an accessory protein needed during the final step in the assembly of 30S ribosomal subunit, possibly for assembly of the head region. Essential for efficient processing of 16S rRNA. May be needed both before and after RbfA during the maturation of 16S rRNA. It has affinity for free ribosomal 30S subunits but not for 70S ribosomes. In Mycobacterium ulcerans (strain Agy99), this protein is Ribosome maturation factor RimM.